The primary structure comprises 454 residues: Serine/arginine (SR)-type shuttling mRNA binding protein HRB1 (454 aa).

The disordered stretch occupies residues 1-141; it reads MSDQERGSEN…SSGARGDYGP (141 aa). The segment covering 14-24 has biased composition (basic residues); that stretch reads SRSRSRSPVRR. Basic and acidic residues-rich tracts occupy residues 25 to 38 and 50 to 113; these read RMSDDHGYERDNHL and KFAD…DYPR. An Omega-N-methylarginine modification is found at R127. RRM domains are found at residues 161-237 and 261-338; these read NSIF…QDNP and HEVI…SKES. S338, S343, and S355 each carry phosphoserine. The RRM 3 domain occupies 376 to 453; sequence RLIYCSNLPF…CDLDISYAKR (78 aa).

Post-translationally, methylated by HMT1.

The protein localises to the cytoplasm. The protein resides in the nucleus. Its subcellular location is the P-body. It localises to the stress granule. In terms of biological role, binds to intron-containing transcripts and is involved in quality control for the export of spliced mRNAs from the nucleus. Binds to pre-mRNAs until splicing is completed or until faulty mRNAs are degraded. On correctly spliced mRNAs, GBP2 and HRB1 recruit MEX67 to allow nuclear export. On faulty mRNAs, GBP2 and HRB1 associate with the TRAMP complex that guides those pre-mRNAs to the exosome for degradation. The sequence is that of Serine/arginine (SR)-type shuttling mRNA binding protein HRB1 from Saccharomyces cerevisiae (strain ATCC 204508 / S288c) (Baker's yeast).